We begin with the raw amino-acid sequence, 61 residues long: Small ribosomal subunit protein uS14 (61 aa).

Positions 24, 27, 40, and 43 each coordinate Zn(2+).

It belongs to the universal ribosomal protein uS14 family. Zinc-binding uS14 subfamily. In terms of assembly, part of the 30S ribosomal subunit. Contacts proteins S3 and S10. Zn(2+) serves as cofactor.

Functionally, binds 16S rRNA, required for the assembly of 30S particles and may also be responsible for determining the conformation of the 16S rRNA at the A site. This Rhodopirellula baltica (strain DSM 10527 / NCIMB 13988 / SH1) protein is Small ribosomal subunit protein uS14.